A 436-amino-acid polypeptide reads, in one-letter code: Gamma-glutamyl phosphate reductase (436 aa).

The protein belongs to the gamma-glutamyl phosphate reductase family.

The protein localises to the cytoplasm. The enzyme catalyses L-glutamate 5-semialdehyde + phosphate + NADP(+) = L-glutamyl 5-phosphate + NADPH + H(+). It functions in the pathway amino-acid biosynthesis; L-proline biosynthesis; L-glutamate 5-semialdehyde from L-glutamate: step 2/2. Catalyzes the NADPH-dependent reduction of L-glutamate 5-phosphate into L-glutamate 5-semialdehyde and phosphate. The product spontaneously undergoes cyclization to form 1-pyrroline-5-carboxylate. This is Gamma-glutamyl phosphate reductase from Prochlorococcus marinus subsp. pastoris (strain CCMP1986 / NIES-2087 / MED4).